The primary structure comprises 85 residues: Toxin TdNa8 (85 aa).

The signal sequence occupies residues 1–19; the sequence is MNYLTLIAAASLLTAGTES. One can recognise an LCN-type CS-alpha/beta domain in the interval 21 to 81; the sequence is KDGYPVKEGD…AAIKGYGRCR (61 aa). 4 disulfide bridges follow: Cys31–Cys80, Cys35–Cys56, Cys42–Cys63, and Cys46–Cys65. Proline amide is present on Pro82.

This sequence belongs to the long (4 C-C) scorpion toxin superfamily. Sodium channel inhibitor family. Alpha subfamily. Expressed by the venom gland.

Its subcellular location is the secreted. Its function is as follows. Alpha toxins bind voltage-independently at site-3 of sodium channels (Nav) and inhibit the inactivation of the activated channels, thereby blocking neuronal transmission. The chain is Toxin TdNa8 from Tityus discrepans (Venezuelan scorpion).